Consider the following 478-residue polypeptide: Proline--tRNA ligase (478 aa).

It belongs to the class-II aminoacyl-tRNA synthetase family. ProS type 3 subfamily. As to quaternary structure, homodimer.

Its subcellular location is the cytoplasm. It carries out the reaction tRNA(Pro) + L-proline + ATP = L-prolyl-tRNA(Pro) + AMP + diphosphate. Its function is as follows. Catalyzes the attachment of proline to tRNA(Pro) in a two-step reaction: proline is first activated by ATP to form Pro-AMP and then transferred to the acceptor end of tRNA(Pro). The sequence is that of Proline--tRNA ligase from Methanoregula boonei (strain DSM 21154 / JCM 14090 / 6A8).